The chain runs to 187 residues: UPF0398 protein LBA1157 (187 aa).

The protein belongs to the UPF0398 family.

The chain is UPF0398 protein LBA1157 from Lactobacillus acidophilus (strain ATCC 700396 / NCK56 / N2 / NCFM).